We begin with the raw amino-acid sequence, 432 residues long: Monoacylglycerol lipase ABHD2 (432 aa).

Topologically, residues 1–14 (MNTHESEVYTVAPE) are cytoplasmic. A helical; Signal-anchor for type II membrane protein transmembrane segment spans residues 15-35 (MPAMFDGMKLAAVATVLYVIV). At 36 to 432 (RCLNLKSPTA…NQTTCQENTS (397 aa)) the chain is on the extracellular side. The AB hydrolase-1 domain maps to 132–383 (TMVICPGIGN…HGGHLGFFEG (252 aa)). Residue asparagine 141 is glycosylated (N-linked (GlcNAc...) asparagine). The Nucleophile role is filled by serine 212. N-linked (GlcNAc...) asparagine glycosylation occurs at asparagine 225. Active-site charge relay system residues include aspartate 346 and histidine 377. The tract at residues 413–432 (PPCQSKDAQSNQTTCQENTS) is disordered. Positions 418 to 432 (KDAQSNQTTCQENTS) are enriched in polar residues. Residue asparagine 423 is glycosylated (N-linked (GlcNAc...) asparagine).

It belongs to the AB hydrolase superfamily. AB hydrolase 4 family.

It localises to the cell membrane. It catalyses the reaction Hydrolyzes glycerol monoesters of long-chain fatty acids.. The catalysed reaction is an acetyl ester + H2O = an aliphatic alcohol + acetate + H(+). It carries out the reaction a triacylglycerol + H2O = a diacylglycerol + a fatty acid + H(+). The enzyme catalyses 2-(5Z,8Z,11Z,14Z-eicosatetraenoyl)-glycerol + H2O = glycerol + (5Z,8Z,11Z,14Z)-eicosatetraenoate + H(+). It catalyses the reaction a butanoate ester + H2O = an aliphatic alcohol + butanoate + H(+). The catalysed reaction is hexadecanoate ester + H2O = an aliphatic alcohol + hexadecanoate + H(+). Acylglycerol lipase activity is activated upon binding to progesterone. Progesterone-dependent acylglycerol lipase that catalyzes hydrolysis of endocannabinoid arachidonoylglycerol (AG) from cell membrane. Acts as a progesterone receptor: progesterone-binding activates the acylglycerol lipase activity, mediating degradation of 1-arachidonoylglycerol (1AG) and 2-arachidonoylglycerol (2AG) to glycerol and arachidonic acid (AA). Also displays an ester hydrolase activity against acetyl ester, butanoate ester and hexadecanoate ester. Plays a key role in sperm capacitation in response to progesterone by mediating degradation of 2AG, an inhibitor of the sperm calcium channel CatSper, leading to calcium influx via CatSper and sperm activation. May also play a role in smooth muscle cells migration. The sequence is that of Monoacylglycerol lipase ABHD2 (abhd2a) from Danio rerio (Zebrafish).